The following is a 185-amino-acid chain: Large ribosomal subunit protein uL5 (185 aa).

Belongs to the universal ribosomal protein uL5 family. Part of the 50S ribosomal subunit; part of the 5S rRNA/L5/L18/L25 subcomplex. Contacts the 5S rRNA and the P site tRNA. Forms a bridge to the 30S subunit in the 70S ribosome.

In terms of biological role, this is one of the proteins that bind and probably mediate the attachment of the 5S RNA into the large ribosomal subunit, where it forms part of the central protuberance. In the 70S ribosome it contacts protein S13 of the 30S subunit (bridge B1b), connecting the 2 subunits; this bridge is implicated in subunit movement. Contacts the P site tRNA; the 5S rRNA and some of its associated proteins might help stabilize positioning of ribosome-bound tRNAs. This chain is Large ribosomal subunit protein uL5, found in Afipia carboxidovorans (strain ATCC 49405 / DSM 1227 / KCTC 32145 / OM5) (Oligotropha carboxidovorans).